The sequence spans 288 residues: Tryptophan 2,3-dioxygenase (288 aa).

Substrate is bound by residues 57 to 61 (FIIQH), Tyr-119, and Arg-123. His-246 contributes to the heme binding site. Thr-260 serves as a coordination point for substrate.

The protein belongs to the tryptophan 2,3-dioxygenase family. Homotetramer. The cofactor is heme.

The catalysed reaction is L-tryptophan + O2 = N-formyl-L-kynurenine. The protein operates within amino-acid degradation; L-tryptophan degradation via kynurenine pathway; L-kynurenine from L-tryptophan: step 1/2. In terms of biological role, heme-dependent dioxygenase that catalyzes the oxidative cleavage of the L-tryptophan (L-Trp) pyrrole ring and converts L-tryptophan to N-formyl-L-kynurenine. Catalyzes the oxidative cleavage of the indole moiety. The chain is Tryptophan 2,3-dioxygenase from Pseudomonas aeruginosa (strain ATCC 15692 / DSM 22644 / CIP 104116 / JCM 14847 / LMG 12228 / 1C / PRS 101 / PAO1).